Consider the following 301-residue polypeptide: tRNA dimethylallyltransferase (301 aa).

An ATP-binding site is contributed by 9 to 16; sequence GPTASGKS. 11–16 is a binding site for substrate; it reads TASGKS. Residues 34–37 form an interaction with substrate tRNA region; the sequence is DSMQ.

It belongs to the IPP transferase family. In terms of assembly, monomer. The cofactor is Mg(2+).

It catalyses the reaction adenosine(37) in tRNA + dimethylallyl diphosphate = N(6)-dimethylallyladenosine(37) in tRNA + diphosphate. Its function is as follows. Catalyzes the transfer of a dimethylallyl group onto the adenine at position 37 in tRNAs that read codons beginning with uridine, leading to the formation of N6-(dimethylallyl)adenosine (i(6)A). The chain is tRNA dimethylallyltransferase from Corynebacterium glutamicum (strain ATCC 13032 / DSM 20300 / JCM 1318 / BCRC 11384 / CCUG 27702 / LMG 3730 / NBRC 12168 / NCIMB 10025 / NRRL B-2784 / 534).